A 497-amino-acid chain; its full sequence is 3-octaprenyl-4-hydroxybenzoate carboxy-lyase (497 aa).

Asn-175 serves as a coordination point for Mn(2+). Residues 178-180 (IYR), 192-194 (RWL), and 197-198 (RG) each bind prenylated FMN. A Mn(2+)-binding site is contributed by Glu-241. Asp-290 (proton donor) is an active-site residue.

It belongs to the UbiD family. In terms of assembly, homohexamer. Requires prenylated FMN as cofactor. Mn(2+) is required as a cofactor.

The protein localises to the cell membrane. It carries out the reaction a 4-hydroxy-3-(all-trans-polyprenyl)benzoate + H(+) = a 2-(all-trans-polyprenyl)phenol + CO2. It functions in the pathway cofactor biosynthesis; ubiquinone biosynthesis. Catalyzes the decarboxylation of 3-octaprenyl-4-hydroxy benzoate to 2-octaprenylphenol, an intermediate step in ubiquinone biosynthesis. This is 3-octaprenyl-4-hydroxybenzoate carboxy-lyase from Shigella boydii serotype 4 (strain Sb227).